Reading from the N-terminus, the 975-residue chain is Importin-11 (975 aa).

M1 carries the N-acetylmethionine modification. Residues 28 to 100 form the Importin N-terminal domain; that stretch reads AEEQLKQWET…RAGLITNFNE (73 aa). 14 HEAT repeats span residues 123-160, 283-317, 318-356, 422-459, 473-509, 511-548, 555-593, 600-636, 640-677, 683-720, 731-773, 819-849, 850-887, and 957-974; these read RQWP…TLAS, QHPI…ERFI, VQCM…KMAF, QTLT…AVGL, WFKT…VKFK, DLRP…DFEF, PYLE…RVNV, GCLV…GLGA, NLYP…TLEN, PELL…SSTE, QSFY…ILPC, QEMD…KLSA, LALL…EDPE, and METV…FLQG. S343 is subject to Phosphoserine.

Belongs to the importin beta family. Interacts with UBE2E3 and RPL12.

Its subcellular location is the cytoplasm. It localises to the nucleus. Functionally, functions in nuclear protein import as nuclear transport receptor. Serves as receptor for nuclear localization signals (NLS) in cargo substrates. Is thought to mediate docking of the importin/substrate complex to the nuclear pore complex (NPC) through binding to nucleoporin and the complex is subsequently translocated through the pore by an energy requiring, Ran-dependent mechanism. At the nucleoplasmic side of the NPC, Ran binds to the importin, the importin/substrate complex dissociates and importin is re-exported from the nucleus to the cytoplasm where GTP hydrolysis releases Ran. The directionality of nuclear import is thought to be conferred by an asymmetric distribution of the GTP- and GDP-bound forms of Ran between the cytoplasm and nucleus. Mediates the nuclear import of RPL12, and of UBE2E3. The polypeptide is Importin-11 (Ipo11) (Mus musculus (Mouse)).